A 318-amino-acid chain; its full sequence is L-lactate dehydrogenase (318 aa).

Residues valine 18, aspartate 39, lysine 44, tyrosine 69, and 83-84 (GA) each bind NAD(+). Substrate is bound by residues glutamine 86 and arginine 92. Residues serine 105, 122–124 (VSN), and serine 147 contribute to the NAD(+) site. 124-127 (NPVD) contacts substrate. Residue 152–155 (DTSR) participates in substrate binding. Histidine 179 serves as the catalytic Proton acceptor. Tyrosine 225 carries the phosphotyrosine modification. A substrate-binding site is contributed by threonine 234.

Belongs to the LDH/MDH superfamily. LDH family. Homotetramer.

It localises to the cytoplasm. The catalysed reaction is (S)-lactate + NAD(+) = pyruvate + NADH + H(+). Its pathway is fermentation; pyruvate fermentation to lactate; (S)-lactate from pyruvate: step 1/1. Functionally, catalyzes the conversion of lactate to pyruvate. This chain is L-lactate dehydrogenase, found in Clostridium botulinum (strain Okra / Type B1).